The sequence spans 269 residues: 4-hydroxy-tetrahydrodipicolinate reductase (269 aa).

Residues 11 to 16 (GASGRM) and Glu37 contribute to the NAD(+) site. NADP(+) is bound at residue Arg38. NAD(+) contacts are provided by residues 101–103 (GTT) and 125–128 (AGNM). His158 functions as the Proton donor/acceptor in the catalytic mechanism. (S)-2,3,4,5-tetrahydrodipicolinate is bound at residue His159. The active-site Proton donor is the Lys162. 168 to 169 (GT) is a (S)-2,3,4,5-tetrahydrodipicolinate binding site.

The protein belongs to the DapB family.

The protein resides in the cytoplasm. The catalysed reaction is (S)-2,3,4,5-tetrahydrodipicolinate + NAD(+) + H2O = (2S,4S)-4-hydroxy-2,3,4,5-tetrahydrodipicolinate + NADH + H(+). The enzyme catalyses (S)-2,3,4,5-tetrahydrodipicolinate + NADP(+) + H2O = (2S,4S)-4-hydroxy-2,3,4,5-tetrahydrodipicolinate + NADPH + H(+). The protein operates within amino-acid biosynthesis; L-lysine biosynthesis via DAP pathway; (S)-tetrahydrodipicolinate from L-aspartate: step 4/4. Catalyzes the conversion of 4-hydroxy-tetrahydrodipicolinate (HTPA) to tetrahydrodipicolinate. In Cereibacter sphaeroides (strain ATCC 17023 / DSM 158 / JCM 6121 / CCUG 31486 / LMG 2827 / NBRC 12203 / NCIMB 8253 / ATH 2.4.1.) (Rhodobacter sphaeroides), this protein is 4-hydroxy-tetrahydrodipicolinate reductase.